A 612-amino-acid chain; its full sequence is UvrABC system protein C (612 aa).

The GIY-YIG domain maps to 20-98; that stretch reads THSGVYRMLD…IKQHRPKYNI (79 aa). The UVR domain occupies 208–243; it reads SSVLEEISAKMYQASEDMEYEKAQVYRDQLVVLRKL.

Belongs to the UvrC family. Interacts with UvrB in an incision complex.

Its subcellular location is the cytoplasm. In terms of biological role, the UvrABC repair system catalyzes the recognition and processing of DNA lesions. UvrC both incises the 5' and 3' sides of the lesion. The N-terminal half is responsible for the 3' incision and the C-terminal half is responsible for the 5' incision. The sequence is that of UvrABC system protein C from Francisella tularensis subsp. tularensis (strain WY96-3418).